The chain runs to 424 residues: MIDLKQLRENPEAFAECLSRRGDYDLQAILDLDQKQRELETERSQLQARSNQIGKTIGERMKGGANPKDPEIQNLRQEGSTVKATLSDLEPKERDLKAEIGELLLTIPNLPSDDTPVGKDETANVEVSRWGDEYIPKNAKLAHWEIGENLGILNFERSVKVAQSRFATLVGAGAALERALIQFMLDQQVEAGYVEVLPPVLVNSDSLTATGQLPKFAEESFKCAEDDLWLSPTAEVPVTNLYRDEIINADDLPIFHCAYTPCFRREAGSYGRDTRGLIRLHQFNKVELVKLVHPSTSAAEHEALVKNAAAILEALKLPYRVLQLCTGDLGFSAAKCYDLEVWLPSADCYREISSCSNFLDFQARRGNIRFKESGQKGTQFVHTLNGSGLAVGRTMAAVLENYQQPDGSVQVPDVLQPYLKRKVL.

Position 233-235 (233-235 (TAE)) interacts with L-serine. Residue 264–266 (RRE) participates in ATP binding. Position 287 (E287) interacts with L-serine. 351–354 (EISS) lines the ATP pocket. S387 contributes to the L-serine binding site.

The protein belongs to the class-II aminoacyl-tRNA synthetase family. Type-1 seryl-tRNA synthetase subfamily. In terms of assembly, homodimer. The tRNA molecule binds across the dimer.

Its subcellular location is the cytoplasm. It catalyses the reaction tRNA(Ser) + L-serine + ATP = L-seryl-tRNA(Ser) + AMP + diphosphate + H(+). The catalysed reaction is tRNA(Sec) + L-serine + ATP = L-seryl-tRNA(Sec) + AMP + diphosphate + H(+). It participates in aminoacyl-tRNA biosynthesis; selenocysteinyl-tRNA(Sec) biosynthesis; L-seryl-tRNA(Sec) from L-serine and tRNA(Sec): step 1/1. Functionally, catalyzes the attachment of serine to tRNA(Ser). Is also able to aminoacylate tRNA(Sec) with serine, to form the misacylated tRNA L-seryl-tRNA(Sec), which will be further converted into selenocysteinyl-tRNA(Sec). This chain is Serine--tRNA ligase, found in Acaryochloris marina (strain MBIC 11017).